Consider the following 404-residue polypeptide: Probable tRNA sulfurtransferase (404 aa).

Residues 61–166 enclose the THUMP domain; the sequence is QTLVTGLPKI…HDATYMMAQV (106 aa). ATP is bound by residues 184–185, 209–210, Arg-266, Gly-288, and Gln-297; these read ML and HF.

It belongs to the ThiI family.

The protein localises to the cytoplasm. The enzyme catalyses [ThiI sulfur-carrier protein]-S-sulfanyl-L-cysteine + a uridine in tRNA + 2 reduced [2Fe-2S]-[ferredoxin] + ATP + H(+) = [ThiI sulfur-carrier protein]-L-cysteine + a 4-thiouridine in tRNA + 2 oxidized [2Fe-2S]-[ferredoxin] + AMP + diphosphate. It carries out the reaction [ThiS sulfur-carrier protein]-C-terminal Gly-Gly-AMP + S-sulfanyl-L-cysteinyl-[cysteine desulfurase] + AH2 = [ThiS sulfur-carrier protein]-C-terminal-Gly-aminoethanethioate + L-cysteinyl-[cysteine desulfurase] + A + AMP + 2 H(+). It functions in the pathway cofactor biosynthesis; thiamine diphosphate biosynthesis. Its function is as follows. Catalyzes the ATP-dependent transfer of a sulfur to tRNA to produce 4-thiouridine in position 8 of tRNAs, which functions as a near-UV photosensor. Also catalyzes the transfer of sulfur to the sulfur carrier protein ThiS, forming ThiS-thiocarboxylate. This is a step in the synthesis of thiazole, in the thiamine biosynthesis pathway. The sulfur is donated as persulfide by IscS. The sequence is that of Probable tRNA sulfurtransferase from Lysinibacillus sphaericus (strain C3-41).